The following is a 489-amino-acid chain: Glucose-1-phosphate adenylyltransferase small subunit, chloroplastic/amyloplastic (489 aa).

The transit peptide at 1–52 directs the protein to the chloroplast; that stretch reads ITVPSTSSKNLQNSLAFSSSSLSGDKIQTTSFLNRRYCRISSRAPIVVSPKA.

Belongs to the bacterial/plant glucose-1-phosphate adenylyltransferase family. As to quaternary structure, heterotetramer. In terms of tissue distribution, prominently expressed in the leaves. A lower level expression is seen in the roots.

It is found in the plastid. The protein localises to the chloroplast. The protein resides in the amyloplast. It catalyses the reaction alpha-D-glucose 1-phosphate + ATP + H(+) = ADP-alpha-D-glucose + diphosphate. It functions in the pathway glycan biosynthesis; starch biosynthesis. Activated by 3'phosphoglycerate, inhibited by orthophosphate. Allosteric regulation. Functionally, this protein plays a role in synthesis of starch. It catalyzes the synthesis of the activated glycosyl donor, ADP-glucose from Glc-1-P and ATP. In Beta vulgaris (Sugar beet), this protein is Glucose-1-phosphate adenylyltransferase small subunit, chloroplastic/amyloplastic (AGPB1).